We begin with the raw amino-acid sequence, 194 residues long: Heme transporter hrg-1 (194 aa).

4 helical membrane passes run 45–65, 71–91, 113–133, and 143–163; these read QIWIAWLGVSAGVMAGTVFAI, IAVTMCFISSGFATLVLHLHL, GATVSFLSFIAMVFCLVVAGI, and LMGANLWIAAVWFFMTSKWSA. The Di-leucine motif signature appears at 182–183; it reads LL.

The protein belongs to the HRG family. In terms of tissue distribution, specifically expressed in the intestinal cells in larvae and adults.

It is found in the endosome membrane. Its subcellular location is the lysosome membrane. Functionally, heme transporter that regulates intracellular heme availability through the endosomal or lysosomal compartment. The sequence is that of Heme transporter hrg-1 (hrg-1) from Caenorhabditis elegans.